The sequence spans 973 residues: ATP-dependent DNA helicase homolog RECG1, chloroplastic/mitochondrial (973 aa).

Residues 1 to 208 (MAAVTLSPCS…ATSEVEATSD (208 aa)) form a sufficient for chloroplastic and mitochondrial trgeting region. A disordered region spans residues 174 to 200 (LLQNDDSSDPREDILDDGSSFTSKTAT). Residues 536–725 (DLKRPVPMNR…LYGDISLTQI (190 aa)) form the Helicase ATP-binding domain. ATP is bound at residue 549 to 556 (GDVGCGKT). The short motif at 655–658 (DEQQ) is the DEQQ box element. One can recognise a Helicase C-terminal domain in the interval 746–904 (GIKEVYSMML…GFYLANIDLL (159 aa)).

It belongs to the helicase family. RecG subfamily. As to expression, expressed in most tissues, not seen in pollen, ovules or developing seeds.

The protein localises to the plastid. Its subcellular location is the chloroplast. It is found in the mitochondrion. It catalyses the reaction Couples ATP hydrolysis with the unwinding of duplex DNA by translocating in the 3'-5' direction.. It carries out the reaction ATP + H2O = ADP + phosphate + H(+). Plays a critical role in recombination and DNA repair. Helps process Holliday junction (HJ) intermediates to mature products by catalyzing branch migration. Has replication fork regression activity, unwinds stalled or blocked replication forks to make a HJ that can be resolved. Has a DNA unwinding activity characteristic of a DNA helicase with 3'-5' polarity. In terms of biological role, plays a role in recombination surveillance and repair of double-stranded (ds)DNA breaks in the mitochondrion. May be able to dissociate D- and R-loops. Able to complement UV sensitivity of a recG deletion in E.coli. The polypeptide is ATP-dependent DNA helicase homolog RECG1, chloroplastic/mitochondrial (Arabidopsis thaliana (Mouse-ear cress)).